A 162-amino-acid polypeptide reads, in one-letter code: uncharacterized protein (162 aa).

Positions 1-23 (MAQLPLSPAPQRPETKTPGKPEA) are disordered. Residues 13 to 23 (PETKTPGKPEA) show a composition bias toward basic and acidic residues.

This is an uncharacterized protein from Rhodobacter capsulatus (Rhodopseudomonas capsulata).